We begin with the raw amino-acid sequence, 387 residues long: Ciliogenesis-associated TTC17-interacting protein (387 aa).

The segment covering 1-10 has biased composition (polar residues); that stretch reads MSSKVYSTGS. Disordered stretches follow at residues 1 to 21 and 361 to 387; these read MSSK…SGPE and SPAL…SGAA. Residues 376-387 show a composition bias toward basic and acidic residues; that stretch reads LEPEGDARSGAA.

It belongs to the CATIP family. As to quaternary structure, interacts with TTC17. In terms of tissue distribution, strongly expressed in round and elongating spermatids, weakly in pachytene spermatocytes. Expressed in Leydig cells (at protein level). Expressed in testis, placenta, prostate and lung, and moderately in ovary and brain.

It is found in the nucleus. It localises to the cytoplasm. The protein resides in the cell membrane. The protein localises to the cytoskeleton. In terms of biological role, plays a role in primary ciliogenesis by modulating actin polymerization. The protein is Ciliogenesis-associated TTC17-interacting protein (CATIP) of Homo sapiens (Human).